The sequence spans 699 residues: MNPIVKSFEYGQHTVTLETGVIARQADAAVLASMGDTTVLVTVVGKKEAEAGRDFFPLTVNYQEKTYAAGKIPGGFFKREGRPSEDETLIARLIDRPIRPLFPNGFTNEVQVIITVVSVDPQIEPDIISMIGTSAALAISGIPFSGPLGAARVGYINGEYVLNPTVTQLANSQLNLVVAGTEGAVLMVESEAQALPEEVMLGSVVYGHDQQQVVIKAIAEFKAEAGKPAWNWTAPVANEALVAQVKELAEVGLAQAYQIQVKQERYAQVAVVKAAAKEALLAANPEVDLREVDGLLGSLEKKVVRGRIIRGEPRIDGREPDMVRALSVLAGVLPRTHGSALFTRGETQALVTCTLGTERDAQKIDSIMGERTNRFMLHYNFPPYSVGETGMVGSPKRREIGHGKLAWRGINAVMPSAEEFPYSVRVVSEITESNGSSSMASVCGTSLALMDAGVPIKTSVAGIAMGLVKEGDNFVVLSDILGDEDHLGDMDFKVAGTRDGVTALQMDIKIEGITKEIMEIALQQAYGARVHILNVMDQAIGSHRDDISDHAPRITTIKINPEKIRDVIGKGGAVIRALTEETGTTIELEDDGTVKIASSNGEATKEAIRRIEEITSEVEVGRIYNGKVIRIVDFGAFVNILPGKDGLVHISQISDERVANVSDHLELNQEVTVKVMEVDRQGRVRLSIKEAQTKEAAAE.

Mg(2+) is bound by residues Asp485 and Asp491. A KH domain is found at 552–611 (PRITTIKINPEKIRDVIGKGGAVIRALTEETGTTIELEDDGTVKIASSNGEATKEAIRRI). Residues 621 to 689 (GRIYNGKVIR…RQGRVRLSIK (69 aa)) form the S1 motif domain.

The protein belongs to the polyribonucleotide nucleotidyltransferase family. Component of the RNA degradosome, which is a multiprotein complex involved in RNA processing and mRNA degradation. Mg(2+) serves as cofactor.

It is found in the cytoplasm. It carries out the reaction RNA(n+1) + phosphate = RNA(n) + a ribonucleoside 5'-diphosphate. Its function is as follows. Involved in mRNA degradation. Catalyzes the phosphorolysis of single-stranded polyribonucleotides processively in the 3'- to 5'-direction. This is Polyribonucleotide nucleotidyltransferase from Shewanella sp. (strain MR-4).